Reading from the N-terminus, the 195-residue chain is Putative NADH dehydrogenase/NAD(P)H nitroreductase Bcep18194_B1060 (195 aa).

Belongs to the nitroreductase family. HadB/RutE subfamily. Requires FMN as cofactor.

This Burkholderia lata (strain ATCC 17760 / DSM 23089 / LMG 22485 / NCIMB 9086 / R18194 / 383) protein is Putative NADH dehydrogenase/NAD(P)H nitroreductase Bcep18194_B1060.